The following is a 364-amino-acid chain: Protein-glutamate methylesterase/protein-glutamine glutaminase (364 aa).

A Response regulatory domain is found at 7 to 124; it reads RALIVDDSAL…SQNMPDMAEE (118 aa). Position 58 is a 4-aspartylphosphate (Asp58). One can recognise a CheB-type methylesterase domain in the interval 167–364; the sequence is ETTSFVRNVL…MAEEIVKIIS (198 aa). Residues Ser181, His208, and Asp308 contribute to the active site.

This sequence belongs to the CheB family. Phosphorylated by CheA. Phosphorylation of the N-terminal regulatory domain activates the methylesterase activity.

Its subcellular location is the cytoplasm. The enzyme catalyses [protein]-L-glutamate 5-O-methyl ester + H2O = L-glutamyl-[protein] + methanol + H(+). It carries out the reaction L-glutaminyl-[protein] + H2O = L-glutamyl-[protein] + NH4(+). Involved in chemotaxis. Part of a chemotaxis signal transduction system that modulates chemotaxis in response to various stimuli. Catalyzes the demethylation of specific methylglutamate residues introduced into the chemoreceptors (methyl-accepting chemotaxis proteins or MCP) by CheR. Also mediates the irreversible deamidation of specific glutamine residues to glutamic acid. The polypeptide is Protein-glutamate methylesterase/protein-glutamine glutaminase (Methanosarcina barkeri (strain Fusaro / DSM 804)).